The sequence spans 211 residues: MVAPMASKIEVSIVDQNPVVRTGLETLLVRDGRFSVSGIYASGEDLLAALQTKPVEIVIVGWSLPDMTGGDVLTRVRKEKWRTRIIIYTGERSSEVLRTAIKSGAWGFVAKTEEPQVLLEAVVSVARGRLSLPYVDIDLLNHDPLESLTARERELLAALANGWTNLQIAARTGISRNTVKYHLKNLYDKLGVSNRAMAVALHVSINRNEHR.

Positions 10-126 (EVSIVDQNPV…VLLEAVVSVA (117 aa)) constitute a Response regulatory domain. A 4-aspartylphosphate modification is found at aspartate 15. Positions 141 to 206 (NHDPLESLTA…MAVALHVSIN (66 aa)) constitute an HTH luxR-type domain. The H-T-H motif DNA-binding region spans 165–184 (NLQIAARTGISRNTVKYHLK).

Functionally, not known. Could act on the sgaA gene expression. This Hyphomicrobium methylovorum protein is Probable transcriptional regulatory protein SgaR (sgaR).